Consider the following 191-residue polypeptide: Ribosome maturation factor RimP (191 aa).

The protein belongs to the RimP family.

It is found in the cytoplasm. In terms of biological role, required for maturation of 30S ribosomal subunits. The protein is Ribosome maturation factor RimP of Caulobacter vibrioides (strain NA1000 / CB15N) (Caulobacter crescentus).